The primary structure comprises 387 residues: Sorting nexin-7 (387 aa).

The PX domain occupies 30 to 151 (KDLFITVDAP…VFLTAQAEEL (122 aa)). A 1,2-diacyl-sn-glycero-3-phospho-(1D-myo-inositol-3-phosphate) contacts are provided by Arg73, Gln75, Lys103, and Arg117. Positions 178–387 (GVKNRPEEFM…PSEEDSEEKL (210 aa)) constitute a BAR domain.

It belongs to the sorting nexin family. In terms of assembly, heterodimer; heterodimerizes with SNX4.

The protein localises to the early endosome membrane. Functionally, involved in the regulation of endocytosis and in several stages of intracellular trafficking. Together with SNX4, involved in autophagosome assembly by regulating trafficking and recycling of phospholipid scramblase ATG9A. In Mus musculus (Mouse), this protein is Sorting nexin-7.